An 86-amino-acid chain; its full sequence is Kappa-theraphotoxin-Cg1a 3 (86 aa).

A signal peptide spans 1 to 21 (MKVSVLITLAVLGVMFVWASA). The propeptide occupies 22–50 (AELEERGSDQRDSPAWLKSMERIFRSEER). 3 disulfides stabilise this stretch: Cys52–Cys66, Cys59–Cys71, and Cys65–Cys78. At Phe84 the chain carries Phenylalanine amide.

This sequence belongs to the neurotoxin 10 (Hwtx-1) family. 28 (Jztx-11) subfamily. As to expression, expressed by the venom gland.

It is found in the secreted. This toxin acts as a voltage-dependent gating-modifier. It inhibits the sodium conductance (IC(50)=124 nM) and slows the fast inactivation (EC(50)=1180 nM) of Nav1.5/SCN5A. It significantly shifts the activation to more depolarized voltages and decreases the deactivation of Nav1.5 currents upon extreme depolarization, but only slightly affects voltage-dependence of steady-state inactivation. In addition, this toxin causes an approximately five-fold decrease in the rate of recovery from inactivation and an approximately 1.9-fold reduction in the closed-state inactivation rate. This toxin integrates the functions of site 3 toxins (alpha-scorpion toxins) with site 4 toxins (beta-scorpion and spider toxins) by targeting multiple sites on Nav1.5. Also shows inhibition of voltage-gated potassium channels (5 uM completely inhibits Kv2.1/KCNB1, whereas 5 uM moderately inhibits Kv4.2/KCND2 Kv4.1/KCND1 channels). The polypeptide is Kappa-theraphotoxin-Cg1a 3 (Chilobrachys guangxiensis (Chinese earth tiger tarantula)).